The chain runs to 490 residues: ATP synthase subunit beta, chloroplastic (490 aa).

Residue 170–177 (GGXGVGKT) participates in ATP binding.

It belongs to the ATPase alpha/beta chains family. In terms of assembly, F-type ATPases have 2 components, CF(1) - the catalytic core - and CF(0) - the membrane proton channel. CF(1) has five subunits: alpha(3), beta(3), gamma(1), delta(1), epsilon(1). CF(0) has four main subunits: a(1), b(1), b'(1) and c(9-12).

The protein localises to the plastid. It localises to the chloroplast thylakoid membrane. It catalyses the reaction ATP + H2O + 4 H(+)(in) = ADP + phosphate + 5 H(+)(out). Its function is as follows. Produces ATP from ADP in the presence of a proton gradient across the membrane. The catalytic sites are hosted primarily by the beta subunits. The chain is ATP synthase subunit beta, chloroplastic from Ipomoea coccinea (Scarlet morning-glory).